Consider the following 136-residue polypeptide: Small ribosomal subunit protein uS8c (136 aa).

The protein belongs to the universal ribosomal protein uS8 family. As to quaternary structure, part of the 30S ribosomal subunit.

It localises to the plastid. The protein localises to the chloroplast. One of the primary rRNA binding proteins, it binds directly to 16S rRNA central domain where it helps coordinate assembly of the platform of the 30S subunit. This chain is Small ribosomal subunit protein uS8c (rps8), found in Agrostis stolonifera (Creeping bentgrass).